The primary structure comprises 109 residues: Tyrosine-protein phosphatase 6 (109 aa).

Residues 1-109 (YNINVIVMVC…SEDETTPLCV (109 aa)) form the Tyrosine-protein phosphatase domain. D76 serves as a coordination point for substrate.

It belongs to the protein-tyrosine phosphatase family.

It catalyses the reaction O-phospho-L-tyrosyl-[protein] + H2O = L-tyrosyl-[protein] + phosphate. This is Tyrosine-protein phosphatase 6 (STY-6) from Styela plicata (Wrinkled sea squirt).